The sequence spans 481 residues: Two-component response regulator ORR32 (481 aa).

Residues 13 to 138 (HVMLVDDDTK…TIALWRVVAW (126 aa)) enclose the Response regulatory domain. Position 66 is a 4-aspartylphosphate (Asp66).

This sequence belongs to the ARR family. Type-B subfamily. In terms of processing, two-component system major event consists of a His-to-Asp phosphorelay between a sensor histidine kinase (HK) and a response regulator (RR). In plants, the His-to-Asp phosphorelay involves an additional intermediate named Histidine-containing phosphotransfer protein (HPt). This multistep phosphorelay consists of a His-Asp-His-Asp sequential transfer of a phosphate group between first a His and an Asp of the HK protein, followed by the transfer to a conserved His of the HPt protein and finally the transfer to an Asp in the receiver domain of the RR protein.

Functionally, functions as a response regulator involved in His-to-Asp phosphorelay signal transduction system. Phosphorylation of the Asp residue in the receiver domain activates the ability of the protein to promote the transcription of target genes. May directly activate some type-A response regulators in response to cytokinins. The polypeptide is Two-component response regulator ORR32 (Oryza sativa subsp. japonica (Rice)).